The chain runs to 450 residues: C4-dicarboxylate transport protein (450 aa).

Helical transmembrane passes span 25–45 (VVFA…YGAA), 56–76 (LIKM…IASM), 90–110 (MAYF…VANV), 162–182 (ILQV…VGDA), 200–220 (LVNI…AFTI), 234–254 (LVLT…GAVA), 319–339 (IYMT…LTLG), and 367–387 (AATL…ILGV).

The protein belongs to the dicarboxylate/amino acid:cation symporter (DAACS) (TC 2.A.23) family.

It localises to the cell inner membrane. Responsible for the transport of dicarboxylates such as succinate, fumarate, and malate from the periplasm across the membrane. In Acidovorax ebreus (strain TPSY) (Diaphorobacter sp. (strain TPSY)), this protein is C4-dicarboxylate transport protein.